The sequence spans 223 residues: UPF0441 protein YgiB (223 aa).

A compositionally biased stretch (low complexity) spans 178-195 (TVPKTAMAPKPATTTTVT). Residues 178 to 223 (TVPKTAMAPKPATTTTVTRGGFGESIAKQSTMQRSATGTSSRSMGG) form a disordered region. A compositionally biased stretch (polar residues) spans 204–223 (AKQSTMQRSATGTSSRSMGG).

It belongs to the UPF0441 family.

This chain is UPF0441 protein YgiB, found in Shigella boydii serotype 4 (strain Sb227).